The chain runs to 1583 residues: Protein mesh (1583 aa).

An N-terminal signal peptide occupies residues 1 to 21 (MGVKIKLVLAVVLILSANVLG). Residues 22-1182 (QDEIVNDTES…EFSQRALFLT (1161 aa)) lie on the Extracellular side of the membrane. The region spanning 260–415 (GIYFRLDRDL…GRHIFRIDEN (156 aa)) is the NIDO domain. Residues 647–798 (GQRWSNSMCN…VGCETFRFER (152 aa)) form the AMOP domain. The VWFD domain occupies 811-1019 (GVAGIFGDPH…HWQLTDREQR (209 aa)). The region spanning 1110–1170 (ISCGILETPR…PDYGYTECLR (61 aa)) is the Sushi domain. Intrachain disulfides connect Cys-1112-Cys-1152 and Cys-1138-Cys-1168. The chain crosses the membrane as a helical span at residues 1183–1203 (WGVIVAVILPLGLLICLLWFW). Residues 1204 to 1472 (CWHKPRSEGK…QEYSSRTLGA (269 aa)) lie on the Cytoplasmic side of the membrane. Residues 1232-1250 (LRSSSMGNITDTMKSSTIP) show a composition bias toward polar residues. The segment at 1232–1448 (LRSSSMGNIT…IPEAPKSAPV (217 aa)) is disordered. The span at 1291–1300 (GKSDSGKSDK) shows a compositional bias: basic and acidic residues. The segment covering 1405–1416 (PIPSQYSPTYSE) has biased composition (polar residues). The helical transmembrane segment at 1473-1493 (TWGIISAVMLPIIIILICVAW) threads the bilayer. The Extracellular segment spans residues 1494-1583 (RILQRRKAEE…RQWGGETEIN (90 aa)). A compositionally biased stretch (basic and acidic residues) spans 1521 to 1539 (DSVKVTSDDESIPYKKDVT). Positions 1521–1583 (DSVKVTSDDE…RQWGGETEIN (63 aa)) are disordered.

As to expression, in fifth instar larvae, expressed in midgut epithelial cells (at protein level).

Its subcellular location is the membrane. It localises to the cell junction. The protein resides in the septate junction. It is found in the lateral cell membrane. May be required for the proper organization of smooth septate junctions and for the barrier function of the midgut epithelium. This is Protein mesh from Bombyx mori (Silk moth).